A 354-amino-acid chain; its full sequence is Homer protein homolog 2 (354 aa).

The region spanning 1 to 110 is the WH1 domain; the sequence is MGEQPIFTTR…EKFQEVKEAA (110 aa). The stretch at 92–122 forms a coiled coil; it reads SEQQLTKFAEKFQEVKEAAKIAKDKTQEKIE. A compositionally biased stretch (basic and acidic residues) spans 112-122; the sequence is IAKDKTQEKIE. A disordered region spans residues 112-166; sequence IAKDKTQEKIETSSNHSQESGRETPSSTQASSVNGTDDEKASHAGPANTHLKSEN. The segment covering 123-146 has biased composition (polar residues); that stretch reads TSSNHSQESGRETPSSTQASSVNG. The stretch at 160-329 forms a coiled coil; the sequence is THLKSENDKL…RHLKVELKSF (170 aa).

Belongs to the Homer family. As to quaternary structure, forms coiled-coil structures that mediate homo- and heteromultimerization. Interacts with NFATC2; interaction is reduced by AKT activation. Interacts with NFATC1 and NFATC4. Interacts with DAGLA (via PPXXF motif); this interaction is required for the cell membrane localization of DAGLA.

The protein resides in the cytoplasm. It is found in the cell membrane. It localises to the postsynaptic density. The protein localises to the synapse. Its subcellular location is the cell projection. The protein resides in the stereocilium. Postsynaptic density scaffolding protein. Binds and cross-links cytoplasmic regions of GRM1, GRM5, ITPR1, DNM3, RYR1, RYR2, SHANK1 and SHANK3. By physically linking GRM1 and GRM5 with ER-associated ITPR1 receptors, it aids the coupling of surface receptors to intracellular calcium release. May also couple GRM1 to PI3 kinase through its interaction with AGAP2. Isoforms can be differently regulated and may play an important role in maintaining the plasticity at glutamatergic synapses. Required for normal hearing. Negatively regulates T cell activation by inhibiting the calcineurin-NFAT pathway. Acts by competing with calcineurin/PPP3CA for NFAT protein binding, hence preventing NFAT activation by PPP3CA. The chain is Homer protein homolog 2 from Homo sapiens (Human).